The chain runs to 444 residues: Tryptophan 5-hydroxylase 1 (444 aa).

An ACT domain is found at 19-94; sequence TLIFSLKNEV…NVLSVTPPDN (76 aa). Residue Ser58 is modified to Phosphoserine; by PKA. Residues Tyr235, Arg257, and Thr265 each contribute to the L-tryptophan site. Residues His272, His277, and Glu317 each contribute to the Fe cation site. Positions 336 and 366 each coordinate L-tryptophan.

Belongs to the biopterin-dependent aromatic amino acid hydroxylase family. As to quaternary structure, homotetramer. Interacts with DNAJC12. It depends on Fe(2+) as a cofactor. Post-translationally, ubiquitinated, leading to its degradation by the proteasome. Ubiquitinated is triggered by phosphorylation. Phosphorylated; triggering degradation by the proteasome.

It catalyses the reaction (6R)-L-erythro-5,6,7,8-tetrahydrobiopterin + L-tryptophan + O2 = 5-hydroxy-L-tryptophan + (4aS,6R)-4a-hydroxy-L-erythro-5,6,7,8-tetrahydrobiopterin. Its pathway is aromatic compound metabolism; serotonin biosynthesis; serotonin from L-tryptophan: step 1/2. Oxidizes L-tryptophan to 5-hydroxy-l-tryptophan in the rate-determining step of serotonin biosynthesis. The sequence is that of Tryptophan 5-hydroxylase 1 (TPH1) from Oryctolagus cuniculus (Rabbit).